We begin with the raw amino-acid sequence, 187 residues long: MSKKSNKNLAFSLLGLIISMVLLSFASVPIYNLFCKVTGYGGTTAKETVSVYSKVKGTKPIIIEFDANVDKDLPWRFIPRQQRVQIVPGQNTLVFYETENLSNNDIIGTSVYNVTPNKAGKYFVKIHCFCFEEQLLKADEKVLMPVTFYIDKDFELDPEMQDIKVLTLSYSFFKVREIASLRGNTKY.

Residues 1–9 (MSKKSNKNL) lie on the Cytoplasmic side of the membrane. A helical; Signal-anchor for type II membrane protein membrane pass occupies residues 10 to 30 (AFSLLGLIISMVLLSFASVPI). Over 31–187 (YNLFCKVTGY…IASLRGNTKY (157 aa)) the chain is Periplasmic.

Belongs to the COX11/CtaG family.

It localises to the cell inner membrane. Exerts its effect at some terminal stage of cytochrome c oxidase synthesis, probably by being involved in the insertion of the copper B into subunit I. The sequence is that of Cytochrome c oxidase assembly protein CtaG from Rickettsia felis (strain ATCC VR-1525 / URRWXCal2) (Rickettsia azadi).